The sequence spans 644 residues: Exoribonuclease 2 (644 aa).

The RNB domain maps to 189-516 (REDLTALDFV…NHRLLKAVIK (328 aa)). The S1 motif domain occupies 561–643 (DTRFAAEIVD…ETRSIIARPV (83 aa)).

This sequence belongs to the RNR ribonuclease family. RNase II subfamily.

The protein localises to the cytoplasm. The catalysed reaction is Exonucleolytic cleavage in the 3'- to 5'-direction to yield nucleoside 5'-phosphates.. Its function is as follows. Involved in mRNA degradation. Hydrolyzes single-stranded polyribonucleotides processively in the 3' to 5' direction. The protein is Exoribonuclease 2 of Escherichia coli (strain ATCC 8739 / DSM 1576 / NBRC 3972 / NCIMB 8545 / WDCM 00012 / Crooks).